The primary structure comprises 420 residues: Putative movement protein (420 aa).

Low complexity-rich tracts occupy residues 1–18 (MPLT…TSFS) and 30–59 (TSCS…GSCP). 6 disordered regions span residues 1-77 (MPLT…TARP), 137-181 (SMSR…SARS), 195-219 (RPKT…STRT), 235-281 (IMSE…RPPP), 327-370 (PSAG…RPIQ), and 396-420 (LPPP…QPWP). Pro residues predominate over residues 60 to 69 (KTPPGTPPLP). Over residues 137–157 (SMSRRATQPPTTRSRVRPSTG) the composition is skewed to polar residues. Over residues 158 to 181 (SRPPVSPLVTSSSPSPFSTLSARS) the composition is skewed to low complexity. Positions 253–263 (GLRSASLSTAG) are enriched in polar residues. The segment covering 327–348 (PSAGSSPFTPTVSGCSASTSSA) has biased composition (low complexity).

Its function is as follows. Cell-to-cell movement. This chain is Putative movement protein, found in Maize rayado fino virus (isolate Costa Rica/Guapiles) (MRFV).